Here is a 308-residue protein sequence, read N- to C-terminus: tRNA dimethylallyltransferase (308 aa).

ATP is bound at residue 11–18; that stretch reads GSTATGKS. Position 13-18 (13-18) interacts with substrate; the sequence is TATGKS. Residues 36-39 form an interaction with substrate tRNA region; that stretch reads DSVQ.

It belongs to the IPP transferase family. In terms of assembly, monomer. It depends on Mg(2+) as a cofactor.

The catalysed reaction is adenosine(37) in tRNA + dimethylallyl diphosphate = N(6)-dimethylallyladenosine(37) in tRNA + diphosphate. In terms of biological role, catalyzes the transfer of a dimethylallyl group onto the adenine at position 37 in tRNAs that read codons beginning with uridine, leading to the formation of N6-(dimethylallyl)adenosine (i(6)A). The sequence is that of tRNA dimethylallyltransferase from Bdellovibrio bacteriovorus (strain ATCC 15356 / DSM 50701 / NCIMB 9529 / HD100).